Consider the following 87-residue polypeptide: Beta-toxin Cn5 (87 aa).

The signal sequence occupies residues 1–19; sequence MNSLLMITACLFLIGTVWA. In terms of domain architecture, LCN-type CS-alpha/beta spans 20 to 85; that stretch reads KEGYLVNKST…TYPLPNKSCS (66 aa). Cystine bridges form between C31–C84, C35–C60, C44–C65, and C48–C67.

Belongs to the long (4 C-C) scorpion toxin superfamily. Sodium channel inhibitor family. Beta subfamily. Expressed by the venom gland.

The protein resides in the secreted. In terms of biological role, beta toxins bind voltage-independently at site-4 of sodium channels (Nav) and shift the voltage of activation toward more negative potentials thereby affecting sodium channel activation and promoting spontaneous and repetitive firing. This toxin is lethal to crustaceans (freshwater crayfish (Cambarellus montezumae spp.)), it provokes a reversible paralysis to insects (crickets (Achaeta spp.)), but is not toxic to mice. At high concentrations, it does displace the (beta) mammal-specific toxin Cn2 from rat brain synaptosomes. This chain is Beta-toxin Cn5, found in Centruroides noxius (Mexican scorpion).